The following is a 71-amino-acid chain: DNA-directed RNA polymerase subunit omega (71 aa).

It belongs to the RNA polymerase subunit omega family. The RNAP catalytic core consists of 2 alpha, 1 beta, 1 beta' and 1 omega subunit. When a sigma factor is associated with the core the holoenzyme is formed, which can initiate transcription.

The catalysed reaction is RNA(n) + a ribonucleoside 5'-triphosphate = RNA(n+1) + diphosphate. In terms of biological role, promotes RNA polymerase assembly. Latches the N- and C-terminal regions of the beta' subunit thereby facilitating its interaction with the beta and alpha subunits. This chain is DNA-directed RNA polymerase subunit omega, found in Levilactobacillus brevis (strain ATCC 367 / BCRC 12310 / CIP 105137 / JCM 1170 / LMG 11437 / NCIMB 947 / NCTC 947) (Lactobacillus brevis).